A 199-amino-acid polypeptide reads, in one-letter code: TATA-box-binding protein (199 aa).

2 repeat units span residues 10 to 86 (IENI…VKLL) and 101 to 177 (VQNI…YNQL).

This sequence belongs to the TBP family.

Functionally, general factor that plays a role in the activation of archaeal genes transcribed by RNA polymerase. Binds specifically to the TATA box promoter element which lies close to the position of transcription initiation. The protein is TATA-box-binding protein of Pyrobaculum islandicum (strain DSM 4184 / JCM 9189 / GEO3).